Reading from the N-terminus, the 185-residue chain is Ribosome-recycling factor (185 aa).

It belongs to the RRF family.

Its subcellular location is the cytoplasm. In terms of biological role, responsible for the release of ribosomes from messenger RNA at the termination of protein biosynthesis. May increase the efficiency of translation by recycling ribosomes from one round of translation to another. The protein is Ribosome-recycling factor of Wolbachia sp. subsp. Drosophila simulans (strain wRi).